The chain runs to 476 residues: mRNA-capping enzyme subunit beta (476 aa).

Positions 1 to 133 (MNVGSILNDE…KLKSTNKPRR (133 aa)) are disordered. 2 stretches are compositionally biased toward basic and acidic residues: residues 51–67 (LKTK…EHSN) and 105–114 (HPIEQDKSEK). Residues 123–132 (SKLKSTNKPR) show a composition bias toward basic residues.

The protein belongs to the fungal TPase family. As to quaternary structure, heterodimer. The mRNA-capping enzyme is composed of two separate chains alpha and beta, respectively a mRNA guanylyltransferase and an mRNA 5'-triphosphate monophosphatase. Mg(2+) is required as a cofactor.

It localises to the nucleus. It carries out the reaction a 5'-end triphospho-ribonucleoside in mRNA + H2O = a 5'-end diphospho-ribonucleoside in mRNA + phosphate + H(+). First step of mRNA capping. Converts the 5'-triphosphate end of a nascent mRNA chain into a diphosphate end. This Debaryomyces hansenii (strain ATCC 36239 / CBS 767 / BCRC 21394 / JCM 1990 / NBRC 0083 / IGC 2968) (Yeast) protein is mRNA-capping enzyme subunit beta (CET1).